A 355-amino-acid polypeptide reads, in one-letter code: dTDP-D-glucose 4,6-dehydratase (355 aa).

Thr-142 is a binding site for substrate. Residue Asp-143 is the Proton donor of the active site. Residues Glu-144 and Tyr-166 each act as proton acceptor in the active site.

The protein belongs to the NAD(P)-dependent epimerase/dehydratase family. dTDP-glucose dehydratase subfamily. Requires NAD(+) as cofactor.

It catalyses the reaction dTDP-alpha-D-glucose = dTDP-4-dehydro-6-deoxy-alpha-D-glucose + H2O. The protein is dTDP-D-glucose 4,6-dehydratase (Tgds) of Mus musculus (Mouse).